We begin with the raw amino-acid sequence, 98 residues long: NADH-ubiquinone oxidoreductase chain 4L (98 aa).

3 helical membrane-spanning segments follow: residues 1 to 21 (MAPI…GVLI), 28 to 48 (STLL…TLLI), and 59 to 79 (APLI…ALLV).

Belongs to the complex I subunit 4L family. Core subunit of respiratory chain NADH dehydrogenase (Complex I) which is composed of 45 different subunits.

The protein localises to the mitochondrion inner membrane. The enzyme catalyses a ubiquinone + NADH + 5 H(+)(in) = a ubiquinol + NAD(+) + 4 H(+)(out). Functionally, core subunit of the mitochondrial membrane respiratory chain NADH dehydrogenase (Complex I) which catalyzes electron transfer from NADH through the respiratory chain, using ubiquinone as an electron acceptor. Part of the enzyme membrane arm which is embedded in the lipid bilayer and involved in proton translocation. In Isoodon macrourus (Short-nosed bandicoot), this protein is NADH-ubiquinone oxidoreductase chain 4L (MT-ND4L).